Consider the following 233-residue polypeptide: Ubiquinone biosynthesis O-methyltransferase (233 aa).

Residues R37, G56, D77, and M121 each coordinate S-adenosyl-L-methionine.

The protein belongs to the methyltransferase superfamily. UbiG/COQ3 family.

The catalysed reaction is a 3-demethylubiquinol + S-adenosyl-L-methionine = a ubiquinol + S-adenosyl-L-homocysteine + H(+). It carries out the reaction a 3-(all-trans-polyprenyl)benzene-1,2-diol + S-adenosyl-L-methionine = a 2-methoxy-6-(all-trans-polyprenyl)phenol + S-adenosyl-L-homocysteine + H(+). It functions in the pathway cofactor biosynthesis; ubiquinone biosynthesis. O-methyltransferase that catalyzes the 2 O-methylation steps in the ubiquinone biosynthetic pathway. The protein is Ubiquinone biosynthesis O-methyltransferase of Azoarcus sp. (strain BH72).